The chain runs to 302 residues: uncharacterized protein (302 aa).

Disordered regions lie at residues 15–34 (RHSTIPSDTHTSREKPRFHK), 143–195 (GMPL…PSHL), and 221–246 (GSEARSLSLRRQESQPHSGSSRRESV). Basic and acidic residues predominate over residues 172-189 (HSDENKATGQGRENRDQP).

This is an uncharacterized protein from Homo sapiens (Human).